Consider the following 163-residue polypeptide: 6,7-dimethyl-8-ribityllumazine synthase (163 aa).

Residues phenylalanine 27, 58–60 (ALE), and 87–89 (CVI) contribute to the 5-amino-6-(D-ribitylamino)uracil site. 92-93 (DT) lines the (2S)-2-hydroxy-3-oxobutyl phosphate pocket. The Proton donor role is filled by histidine 95. Asparagine 120 provides a ligand contact to 5-amino-6-(D-ribitylamino)uracil. Residue arginine 134 coordinates (2S)-2-hydroxy-3-oxobutyl phosphate.

It belongs to the DMRL synthase family.

It carries out the reaction (2S)-2-hydroxy-3-oxobutyl phosphate + 5-amino-6-(D-ribitylamino)uracil = 6,7-dimethyl-8-(1-D-ribityl)lumazine + phosphate + 2 H2O + H(+). Its pathway is cofactor biosynthesis; riboflavin biosynthesis; riboflavin from 2-hydroxy-3-oxobutyl phosphate and 5-amino-6-(D-ribitylamino)uracil: step 1/2. Functionally, catalyzes the formation of 6,7-dimethyl-8-ribityllumazine by condensation of 5-amino-6-(D-ribitylamino)uracil with 3,4-dihydroxy-2-butanone 4-phosphate. This is the penultimate step in the biosynthesis of riboflavin. In Afipia carboxidovorans (strain ATCC 49405 / DSM 1227 / KCTC 32145 / OM5) (Oligotropha carboxidovorans), this protein is 6,7-dimethyl-8-ribityllumazine synthase.